Here is a 160-residue protein sequence, read N- to C-terminus: Ribosome maturation factor RimP (160 aa).

Belongs to the RimP family.

Its subcellular location is the cytoplasm. Functionally, required for maturation of 30S ribosomal subunits. The protein is Ribosome maturation factor RimP of Syntrophus aciditrophicus (strain SB).